We begin with the raw amino-acid sequence, 450 residues long: Bifunctional protein GlmU (450 aa).

Residues 1–217 are pyrophosphorylase; the sequence is MKTLILAAGL…VDEITGVNNR (217 aa). Residues 6-9, K20, Q68, 73-74, 95-97, G134, E146, N161, and N215 contribute to the UDP-N-acetyl-alpha-D-glucosamine site; these read LAAG, GT, and YGD. D97 contacts Mg(2+). Mg(2+) is bound at residue N215. The segment at 218–238 is linker; it reads IQLANLEKKIRRKINEKLMNQ. Residues 239–450 are N-acetyltransferase; sequence GVRIIDPNAV…GGQKNANNKK (212 aa). Positions 320 and 338 each coordinate UDP-N-acetyl-alpha-D-glucosamine. H350 (proton acceptor) is an active-site residue. Residues Y353 and N364 each contribute to the UDP-N-acetyl-alpha-D-glucosamine site. Acetyl-CoA contacts are provided by residues A367, 373-374, S392, A410, and R427; that span reads NY.

In the N-terminal section; belongs to the N-acetylglucosamine-1-phosphate uridyltransferase family. It in the C-terminal section; belongs to the transferase hexapeptide repeat family. Homotrimer. The cofactor is Mg(2+).

It localises to the cytoplasm. The catalysed reaction is alpha-D-glucosamine 1-phosphate + acetyl-CoA = N-acetyl-alpha-D-glucosamine 1-phosphate + CoA + H(+). The enzyme catalyses N-acetyl-alpha-D-glucosamine 1-phosphate + UTP + H(+) = UDP-N-acetyl-alpha-D-glucosamine + diphosphate. It participates in nucleotide-sugar biosynthesis; UDP-N-acetyl-alpha-D-glucosamine biosynthesis; N-acetyl-alpha-D-glucosamine 1-phosphate from alpha-D-glucosamine 6-phosphate (route II): step 2/2. Its pathway is nucleotide-sugar biosynthesis; UDP-N-acetyl-alpha-D-glucosamine biosynthesis; UDP-N-acetyl-alpha-D-glucosamine from N-acetyl-alpha-D-glucosamine 1-phosphate: step 1/1. The protein operates within bacterial outer membrane biogenesis; LPS lipid A biosynthesis. Functionally, catalyzes the last two sequential reactions in the de novo biosynthetic pathway for UDP-N-acetylglucosamine (UDP-GlcNAc). The C-terminal domain catalyzes the transfer of acetyl group from acetyl coenzyme A to glucosamine-1-phosphate (GlcN-1-P) to produce N-acetylglucosamine-1-phosphate (GlcNAc-1-P), which is converted into UDP-GlcNAc by the transfer of uridine 5-monophosphate (from uridine 5-triphosphate), a reaction catalyzed by the N-terminal domain. The chain is Bifunctional protein GlmU from Thermosipho melanesiensis (strain DSM 12029 / CIP 104789 / BI429).